A 348-amino-acid chain; its full sequence is Cyclin-dependent kinase inhibitor 1C (348 aa).

R109 carries the omega-N-methylarginine modification. The tract at residues 115–348 (VAVIPRSGPP…VEQTPRKRLR (234 aa)) is disordered. Acidic residues-rich tracts occupy residues 207–220 (QGEE…DELG) and 227–274 (QGEE…QDEN). A compositionally biased stretch (basic and acidic residues) spans 275 to 284 (QEQRGQELKD). The short motif at 309 to 312 (KRKR) is the Nuclear localization signal element.

It belongs to the CDI family. As to quaternary structure, interacts with PCNA. In terms of tissue distribution, expressed in the heart, brain, lung, skeletal muscle, kidney, pancreas and testis. High levels are seen in the placenta while low levels are seen in the liver.

It localises to the nucleus. Its function is as follows. Potent tight-binding inhibitor of several G1 cyclin/CDK complexes (cyclin E-CDK2, cyclin D2-CDK4, and cyclin A-CDK2) and, to lesser extent, of the mitotic cyclin B-CDC2. Negative regulator of cell proliferation. May play a role in maintenance of the non-proliferative state throughout life. The sequence is that of Cyclin-dependent kinase inhibitor 1C (Cdkn1c) from Mus musculus (Mouse).